The primary structure comprises 464 residues: MKEGIDMRESVAEEPKHKFFQSTEGENKSLDEVNGSVKVPKNAGFWRTLFAYTGPGILIAVGYMDPGNWITSIAGGAQFKYSLLSVILISSLIAMLLQSMAARLGIVTGKDLAQLTRERTSKTMGIILWLITESAIMATDVAEIIGSGIAIKLLFNIPLVVGILITTADVLILLLLMKLGFRKIEAIVATLVAVILLVFTYEVFLAGPQLDQMFAGYMPTKDIVTNKSMLYLALGIVGATVMPHDLYLGSSISQTRAVDRHDRQDVAKAIKFTTIDSNLQLTIAFIVNSLLLILGAALFFGTNSTVGRFVDLFNSLNNSHIVGAIASPMLSMLFAVALLSSGQSSTITGTLSGQIIMEGFIHLRMPLWAQRLLTRLLSVTPVLIFAIYYHGNEAKIENLLTLSQVFLSVALPFAIVPLVKFTSSKELMGEFVNKAWVKYSAWVATVVLVSLNIYLILQTVGVIG.

A run of 11 helical transmembrane segments spans residues 57 to 77, 82 to 102, 125 to 145, 157 to 177, 186 to 206, 229 to 249, 281 to 301, 321 to 341, 376 to 396, 399 to 419, and 443 to 463; these read ILIA…AGGA, SLLS…SMAA, GIIL…AEII, IPLV…LLLM, AIVA…VFLA, MLYL…LYLG, LTIA…LFFG, IVGA…LLSS, LLSV…EAKI, LLTL…VPLV, and VATV…VGVI.

The protein belongs to the NRAMP family.

It is found in the cell membrane. In terms of biological role, h(+)-stimulated, divalent metal cation uptake system. The protein is Divalent metal cation transporter MntH of Levilactobacillus brevis (Lactobacillus brevis).